The primary structure comprises 295 residues: Proline iminopeptidase (295 aa).

In terms of domain architecture, AB hydrolase-1 spans 35–279; that stretch reads TLHGGPGMSH…ACSHLTMWED (245 aa). The Nucleophile role is filled by Ser107. Residue Asp246 is part of the active site. His273 serves as the catalytic Proton donor.

Belongs to the peptidase S33 family. Part of the tricorn proteolytic complex.

It catalyses the reaction Release of N-terminal proline from a peptide.. In terms of biological role, cleaves H-Pro-AMC as well as a wide spectrum of amino acid substrates and several peptide substrates without a proline at the N-terminus. In conjunction with the three factors F1, F2 and F3, Tricorn degrades oligopeptides in a sequential manner, yielding free amino acids. The polypeptide is Proline iminopeptidase (pip) (Thermoplasma volcanium (strain ATCC 51530 / DSM 4299 / JCM 9571 / NBRC 15438 / GSS1)).